Consider the following 246-residue polypeptide: 3-oxoacyl-[acyl-carrier-protein] reductase FabG (246 aa).

Residues 11 to 14, 62 to 63, and Asn-89 each bind NADP(+); these read GASR and NV. Ser-141 provides a ligand contact to substrate. Tyr-154 serves as the catalytic Proton acceptor. NADP(+)-binding positions include 154–158 and Ile-187; that span reads YVATK.

Belongs to the short-chain dehydrogenases/reductases (SDR) family. Homotetramer.

It carries out the reaction a (3R)-hydroxyacyl-[ACP] + NADP(+) = a 3-oxoacyl-[ACP] + NADPH + H(+). The protein operates within lipid metabolism; fatty acid biosynthesis. Catalyzes the NADPH-dependent reduction of beta-ketoacyl-ACP substrates to beta-hydroxyacyl-ACP products, the first reductive step in the elongation cycle of fatty acid biosynthesis. In Staphylococcus aureus (strain Mu50 / ATCC 700699), this protein is 3-oxoacyl-[acyl-carrier-protein] reductase FabG (fabG).